A 688-amino-acid chain; its full sequence is Polyribonucleotide nucleotidyltransferase (688 aa).

Positions 484 and 490 each coordinate Mg(2+). Positions 550–609 (PTTEIFNVAPDKIVEIIGQGGRVIKEIVEKFEVKIDLNKPSGEVKIMGNKERVLKTKEFI) constitute a KH domain. The region spanning 626–688 (DEVLEAQVKR…NKGKIALDLA (63 aa)) is the S1 motif domain.

The protein belongs to the polyribonucleotide nucleotidyltransferase family. Mg(2+) serves as cofactor.

Its subcellular location is the cytoplasm. The catalysed reaction is RNA(n+1) + phosphate = RNA(n) + a ribonucleoside 5'-diphosphate. Involved in mRNA degradation. Catalyzes the phosphorolysis of single-stranded polyribonucleotides processively in the 3'- to 5'-direction. This chain is Polyribonucleotide nucleotidyltransferase, found in Helicobacter pylori (strain P12).